The sequence spans 353 residues: Putative glycosyltransferase TagX (353 aa).

It belongs to the glycosyltransferase 2 family.

This is Putative glycosyltransferase TagX (tagX) from Staphylococcus aureus (strain COL).